Consider the following 1622-residue polypeptide: Ferredoxin-dependent glutamate synthase 1, chloroplastic/mitochondrial (1622 aa).

Residues 1-105 constitute a chloroplast and mitochondrion transit peptide; it reads MAMQSLSPVP…LEDILSERGA (105 aa). C106 (for GATase activity) is an active-site residue. The 400-residue stretch at 106–505 folds into the Glutamine amidotransferase type-2 domain; it reads CGVGFIANLD…PGMMIAVDLV (400 aa). FMN is bound at residue 1184–1241; the sequence is LTETHQTLIANGLRERVILRVDGGLKSGVDVLMAAAMGADEYGFGSLAMIATGCVMAR. 3 residues coordinate [3Fe-4S] cluster: C1237, C1243, and C1248.

It belongs to the glutamate synthase family. In terms of assembly, interacts with SHM1. [3Fe-4S] cluster serves as cofactor. It depends on FAD as a cofactor. The cofactor is FMN. As to expression, highly expressed in leaves. High expression in the leaf mesophyll and phloem companion cell-sieve element complex.

The protein localises to the plastid. It localises to the chloroplast stroma. Its subcellular location is the mitochondrion matrix. The catalysed reaction is 2 oxidized [2Fe-2S]-[ferredoxin] + 2 L-glutamate = L-glutamine + 2 reduced [2Fe-2S]-[ferredoxin] + 2-oxoglutarate + 2 H(+). It participates in amino-acid biosynthesis; L-glutamate biosynthesis via GLT pathway; L-glutamate from 2-oxoglutarate and L-glutamine (ferredoxin route): step 1/1. It functions in the pathway energy metabolism; nitrogen metabolism. Functionally, involved in glutamate biosynthesis in leaf. Required for the reassimilation of ammonium ions generated during photorespiration. The protein is Ferredoxin-dependent glutamate synthase 1, chloroplastic/mitochondrial of Arabidopsis thaliana (Mouse-ear cress).